The sequence spans 426 residues: Pannexin-1 (426 aa).

The Cytoplasmic portion of the chain corresponds to 1-40; it reads MAIAHLATEYVFSDFLLKEPTEPKFKGLRLELAVDKMVTC. An S-nitrosocysteine modification is found at Cys40. Residues 41 to 61 traverse the membrane as a helical segment; it reads IAVGLPLLLISLAFAQEISIG. At 62-106 the chain is on the extracellular side; that stretch reads TQISCFSPSSFSWRQAAFVDSYCWAAVQQKNSLQSESGNLPLWLH. 2 disulfides stabilise this stretch: Cys66/Cys264 and Cys84/Cys245. The chain crosses the membrane as a helical span at residues 107–127; sequence KFFPYILLLFAILLYLPALFW. Topologically, residues 128–216 are cytoplasmic; it reads RFAAAPHLCS…HLIMKYISCR (89 aa). Residue Tyr198 is modified to Phosphotyrosine. Residues 217-237 form a helical membrane-spanning segment; the sequence is LVTFAVVLLACIYLSYYFSLS. The Extracellular segment spans residues 238–277; sequence SLSDEFLCSIKSGVLRNDSTIPDSFQCKLIAVGIFQLLSL. The N-linked (GlcNAc...) asparagine glycan is linked to Asn254. Residues 278–298 form a helical membrane-spanning segment; it reads INLLVYALLVPVVIYTLFVPF. Residues 299–426 are Cytoplasmic-facing; that stretch reads RQKTDVLKVY…SRQRLLNSSC (128 aa). Cys346 carries the post-translational modification S-nitrosocysteine. The disordered stretch occupies residues 407 to 426; it reads ETAANNGEKNSRQRLLNSSC.

It belongs to the pannexin family. As to quaternary structure, homoheptameric. S-nitrosylation inhibits channel currents and ATP release. Post-translationally, N-glycosylation plays a role in cell surface targeting. Glycosylation at its extracellular surface makes unlikely that two oligomers could dock to form an intercellular channel such as in gap junctions. Exists in three glycosylation states: non-glycosylated (GLY0), high-mannose glycosylated (GLY1), and fully mature glycosylated (GLY2). In terms of processing, cleaved by CASP3 and CASP7 during apoptosis. Cleavage opens the channel for the release of metabolites and induces plasma membrane permeability during apoptosis. Phosphorylated at Tyr-198 by SRC. Phosphorylation activates ATP release. Constitutively phosphorylated in vascular smooth muscle cells. Expressed in the eye, thyroid, prostate, kidney and liver. Abundantly expressed in the CNS, including hippocampus, olfactory bulb, cortex, cerebellum and white matter.

The protein resides in the cell membrane. It localises to the endoplasmic reticulum membrane. It carries out the reaction Ca(2+)(in) = Ca(2+)(out). The enzyme catalyses ATP(in) = ATP(out). It catalyses the reaction K(+)(in) = K(+)(out). The catalysed reaction is chloride(in) = chloride(out). It carries out the reaction iodide(out) = iodide(in). The enzyme catalyses Na(+)(in) = Na(+)(out). It catalyses the reaction nitrate(in) = nitrate(out). The catalysed reaction is L-aspartate(out) = L-aspartate(in). It carries out the reaction L-glutamate(out) = L-glutamate(in). The enzyme catalyses D-gluconate(in) = D-gluconate(out). It catalyses the reaction spermidine(in) = spermidine(out). Ion channel involved in a variety of physiological functions such as blood pressure regulation, apoptotic cell clearance and oogenesis. Forms anion-selective channels with relatively low conductance and an order of permeabilities: nitrate&gt;iodide&gt;chlroride&gt;&gt;aspartate=glutamate=gluconate. Can release ATP upon activation through phosphorylation or cleavage at C-terminus. May play a role as a Ca(2+)-leak channel to regulate ER Ca(2+) homeostasis. Its function is as follows. During apoptosis, the C terminal tail is cleaved by caspases, which opens the main pore acting as a large-pore ATP efflux channel with a broad distribution, which allows the regulated release of molecules and ions smaller than 1 kDa, such as nucleotides ATP and UTP, and selective plasma membrane permeability to attract phagocytes that engulf the dying cells. The chain is Pannexin-1 (Panx1) from Rattus norvegicus (Rat).